A 602-amino-acid polypeptide reads, in one-letter code: Aspartate--tRNA(Asp/Asn) ligase (602 aa).

Residue Glu-170 coordinates L-aspartate. Positions 194-197 (QLFK) are aspartate. Arg-216 is an L-aspartate binding site. ATP contacts are provided by residues 216–218 (RDE) and Gln-225. Position 448 (His-448) interacts with L-aspartate. Glu-482 provides a ligand contact to ATP. Arg-489 is an L-aspartate binding site. 534-537 (GWDR) serves as a coordination point for ATP. The tract at residues 559-602 (GGVDPLTDAPAPISAQQRKESGIDAKPEKKSEDKKSEGDTAEAK) is disordered. Basic and acidic residues predominate over residues 575-602 (QRKESGIDAKPEKKSEDKKSEGDTAEAK).

It belongs to the class-II aminoacyl-tRNA synthetase family. Type 1 subfamily. As to quaternary structure, homodimer.

It localises to the cytoplasm. The catalysed reaction is tRNA(Asx) + L-aspartate + ATP = L-aspartyl-tRNA(Asx) + AMP + diphosphate. Aspartyl-tRNA synthetase with relaxed tRNA specificity since it is able to aspartylate not only its cognate tRNA(Asp) but also tRNA(Asn). Reaction proceeds in two steps: L-aspartate is first activated by ATP to form Asp-AMP and then transferred to the acceptor end of tRNA(Asp/Asn). The polypeptide is Aspartate--tRNA(Asp/Asn) ligase (Rhodococcus erythropolis (strain PR4 / NBRC 100887)).